The primary structure comprises 284 residues: Bifunctional protein FolD (284 aa).

Residues 166-168 and isoleucine 232 each bind NADP(+); that span reads GSS.

The protein belongs to the tetrahydrofolate dehydrogenase/cyclohydrolase family. As to quaternary structure, homodimer.

It catalyses the reaction (6R)-5,10-methylene-5,6,7,8-tetrahydrofolate + NADP(+) = (6R)-5,10-methenyltetrahydrofolate + NADPH. The enzyme catalyses (6R)-5,10-methenyltetrahydrofolate + H2O = (6R)-10-formyltetrahydrofolate + H(+). Its pathway is one-carbon metabolism; tetrahydrofolate interconversion. In terms of biological role, catalyzes the oxidation of 5,10-methylenetetrahydrofolate to 5,10-methenyltetrahydrofolate and then the hydrolysis of 5,10-methenyltetrahydrofolate to 10-formyltetrahydrofolate. This is Bifunctional protein FolD from Buchnera aphidicola subsp. Cinara cedri (strain Cc).